The primary structure comprises 378 residues: Protein RecA (378 aa).

79-86 contributes to the ATP binding site; that stretch reads GPESSGKT.

The protein belongs to the RecA family.

It is found in the cytoplasm. Its function is as follows. Can catalyze the hydrolysis of ATP in the presence of single-stranded DNA, the ATP-dependent uptake of single-stranded DNA by duplex DNA, and the ATP-dependent hybridization of homologous single-stranded DNAs. It interacts with LexA causing its activation and leading to its autocatalytic cleavage. The sequence is that of Protein RecA from Streptococcus pyogenes serotype M1.